Consider the following 241-residue polypeptide: Small ribosomal subunit protein uS2 (241 aa).

Belongs to the universal ribosomal protein uS2 family.

This is Small ribosomal subunit protein uS2 from Enterobacter sp. (strain 638).